A 929-amino-acid chain; its full sequence is LPS-assembly protein LptD (929 aa).

An N-terminal signal peptide occupies residues methionine 1 to alanine 24. The disordered stretch occupies residues leucine 26–alanine 208. Positions glycine 44–serine 74 are enriched in basic and acidic residues. A compositionally biased stretch (polar residues) spans arginine 154–alanine 164. Residues aspartate 181 to alanine 208 are compositionally biased toward basic and acidic residues.

It belongs to the LptD family. Component of the lipopolysaccharide transport and assembly complex. Interacts with LptE and LptA.

It is found in the cell outer membrane. In terms of biological role, together with LptE, is involved in the assembly of lipopolysaccharide (LPS) at the surface of the outer membrane. The polypeptide is LPS-assembly protein LptD (Nitrosospira multiformis (strain ATCC 25196 / NCIMB 11849 / C 71)).